The following is a 231-amino-acid chain: Phosphoribosylformylglycinamidine synthase subunit PurQ (231 aa).

In terms of domain architecture, Glutamine amidotransferase type-1 spans 3–231 (FGVLIFPGSN…ESMVGAMAKR (229 aa)). Cysteine 86 serves as the catalytic Nucleophile. Residues histidine 203 and glutamate 205 contribute to the active site.

As to quaternary structure, part of the FGAM synthase complex composed of 1 PurL, 1 PurQ and 2 PurS subunits.

The protein resides in the cytoplasm. It carries out the reaction N(2)-formyl-N(1)-(5-phospho-beta-D-ribosyl)glycinamide + L-glutamine + ATP + H2O = 2-formamido-N(1)-(5-O-phospho-beta-D-ribosyl)acetamidine + L-glutamate + ADP + phosphate + H(+). The enzyme catalyses L-glutamine + H2O = L-glutamate + NH4(+). It functions in the pathway purine metabolism; IMP biosynthesis via de novo pathway; 5-amino-1-(5-phospho-D-ribosyl)imidazole from N(2)-formyl-N(1)-(5-phospho-D-ribosyl)glycinamide: step 1/2. In terms of biological role, part of the phosphoribosylformylglycinamidine synthase complex involved in the purines biosynthetic pathway. Catalyzes the ATP-dependent conversion of formylglycinamide ribonucleotide (FGAR) and glutamine to yield formylglycinamidine ribonucleotide (FGAM) and glutamate. The FGAM synthase complex is composed of three subunits. PurQ produces an ammonia molecule by converting glutamine to glutamate. PurL transfers the ammonia molecule to FGAR to form FGAM in an ATP-dependent manner. PurS interacts with PurQ and PurL and is thought to assist in the transfer of the ammonia molecule from PurQ to PurL. In Koribacter versatilis (strain Ellin345), this protein is Phosphoribosylformylglycinamidine synthase subunit PurQ.